The sequence spans 273 residues: Phosphonates import ATP-binding protein PhnC (273 aa).

Positions 2 to 245 (LRIDKLTKRF…VAREIYGADA (244 aa)) constitute an ABC transporter domain. Position 34–41 (34–41 (GRSGAGKS)) interacts with ATP.

This sequence belongs to the ABC transporter superfamily. Phosphonates importer (TC 3.A.1.9.1) family. As to quaternary structure, the complex is composed of two ATP-binding proteins (PhnC), two transmembrane proteins (PhnE) and a solute-binding protein (PhnD).

The protein localises to the cell inner membrane. It carries out the reaction phosphonate(out) + ATP + H2O = phosphonate(in) + ADP + phosphate + H(+). Functionally, part of the ABC transporter complex PhnCDE involved in phosphonates import. Responsible for energy coupling to the transport system. This is Phosphonates import ATP-binding protein PhnC from Ruegeria pomeroyi (strain ATCC 700808 / DSM 15171 / DSS-3) (Silicibacter pomeroyi).